Reading from the N-terminus, the 381-residue chain is Creatine kinase M-type (381 aa).

The region spanning lysine 11–glycine 98 is the Phosphagen kinase N-terminal domain. The 243-residue stretch at tyrosine 125–leucine 367 folds into the Phosphagen kinase C-terminal domain. ATP is bound by residues serine 128–arginine 132, histidine 191, arginine 236, arginine 292, arginine 320–valine 325, and aspartate 335.

It belongs to the ATP:guanido phosphotransferase family. Dimer of identical or non-identical chains. With MM being the major form in skeletal muscle and myocardium, MB existing in myocardium, and BB existing in many tissues, especially brain.

Its subcellular location is the cytoplasm. The catalysed reaction is creatine + ATP = N-phosphocreatine + ADP + H(+). Its function is as follows. Reversibly catalyzes the transfer of phosphate between ATP and various phosphogens (e.g. creatine phosphate). Creatine kinase isoenzymes play a central role in energy transduction in tissues with large, fluctuating energy demands, such as skeletal muscle, heart, brain and spermatozoa. This Tetronarce californica (Pacific electric ray) protein is Creatine kinase M-type.